The primary structure comprises 268 residues: Probable histidine-binding protein (268 aa).

The N-terminal stretch at Met-1–Ala-20 is a signal peptide. Residue Cys-21 is the site of N-palmitoyl cysteine attachment. A lipid anchor (S-diacylglycerol cysteine) is attached at Cys-21.

This sequence belongs to the bacterial solute-binding protein 3 family.

It localises to the cell membrane. Functionally, involved in histidine transport. This Neisseria gonorrhoeae protein is Probable histidine-binding protein (hisJ).